Here is a 358-residue protein sequence, read N- to C-terminus: 3-isopropylmalate dehydrogenase (358 aa).

77 to 90 serves as a coordination point for NAD(+); sequence GPKWDNLPIDQRPE. Substrate contacts are provided by R98, R108, R137, and D221. D221, D245, and D249 together coordinate Mg(2+). 279 to 291 provides a ligand contact to NAD(+); the sequence is GSAPDIAHLNIAN.

Belongs to the isocitrate and isopropylmalate dehydrogenases family. LeuB type 1 subfamily. As to quaternary structure, homodimer. The cofactor is Mg(2+). Mn(2+) serves as cofactor.

It localises to the cytoplasm. The enzyme catalyses (2R,3S)-3-isopropylmalate + NAD(+) = 4-methyl-2-oxopentanoate + CO2 + NADH. It functions in the pathway amino-acid biosynthesis; L-leucine biosynthesis; L-leucine from 3-methyl-2-oxobutanoate: step 3/4. Catalyzes the oxidation of 3-carboxy-2-hydroxy-4-methylpentanoate (3-isopropylmalate) to 3-carboxy-4-methyl-2-oxopentanoate. The product decarboxylates to 4-methyl-2 oxopentanoate. The sequence is that of 3-isopropylmalate dehydrogenase from Campylobacter jejuni (strain RM1221).